The chain runs to 310 residues: tRNA-cytidine(32) 2-sulfurtransferase (310 aa).

Residues Ser-45 to Ser-50 carry the PP-loop motif motif. [4Fe-4S] cluster-binding residues include Cys-120, Cys-123, and Cys-211.

The protein belongs to the TtcA family. As to quaternary structure, homodimer. Requires Mg(2+) as cofactor. The cofactor is [4Fe-4S] cluster.

It is found in the cytoplasm. It catalyses the reaction cytidine(32) in tRNA + S-sulfanyl-L-cysteinyl-[cysteine desulfurase] + AH2 + ATP = 2-thiocytidine(32) in tRNA + L-cysteinyl-[cysteine desulfurase] + A + AMP + diphosphate + H(+). It participates in tRNA modification. Its function is as follows. Catalyzes the ATP-dependent 2-thiolation of cytidine in position 32 of tRNA, to form 2-thiocytidine (s(2)C32). The sulfur atoms are provided by the cysteine/cysteine desulfurase (IscS) system. This is tRNA-cytidine(32) 2-sulfurtransferase from Shewanella oneidensis (strain ATCC 700550 / JCM 31522 / CIP 106686 / LMG 19005 / NCIMB 14063 / MR-1).